Here is a 28-residue protein sequence, read N- to C-terminus: Cyclotide ltri-A (28 aa).

Positions 1-28 (GVACGESCVYLPCFTVGCTCTSSQCFKN) form a cross-link, cyclopeptide (Gly-Asn). 3 cysteine pairs are disulfide-bonded: C4–C18, C8–C20, and C13–C25.

This sequence belongs to the cyclotide family. Bracelet subfamily. Post-translationally, this is a cyclic peptide.

In terms of biological role, probably participates in a plant defense mechanism. In Leonia triandra, this protein is Cyclotide ltri-A.